The chain runs to 159 residues: Ribosome maturation factor RimP (159 aa).

The protein belongs to the RimP family.

It is found in the cytoplasm. Functionally, required for maturation of 30S ribosomal subunits. The polypeptide is Ribosome maturation factor RimP (Geobacter sulfurreducens (strain ATCC 51573 / DSM 12127 / PCA)).